Consider the following 383-residue polypeptide: MCYQTSKKKRRSRKRRAQEEKEKMGKGVVSEKVKLVVALITLQFCFAGFHIVSRVALNIGVSKVVYPVYRNLLALLLIGPFAYFFEKKERPPLTISLLAQFFFLALIGITANQGFYLLGLYYATPTFASAMQNSVPAITFIMACALRLEHIDLVRKHGVAKVLGTLVSIGGATVITLYRGFPIFDQGLNMQKEEVVGSDNSHSLTLGWLYLMGHCLSWAGWMVLQAPVLKQYPAKLTLTSFTCFFGLIQFLVIALFVETDLNNWIIVSWEELFTILYAGIIASGLVVYLQTWCIYKSGPVFVAVFQPLQTLLVAAMAFLILGDQLYSGGIVGAVFIMLGLYLVLWGKNEERKLALEESQQDPESLTKHLLEAQHKKSNSESEV.

A compositionally biased stretch (basic residues) spans 1–16 (MCYQTSKKKRRSRKRR). Positions 1–23 (MCYQTSKKKRRSRKRRAQEEKEK) are disordered. Transmembrane regions (helical) follow at residues 33–53 (VKLVVALITLQFCFAGFHIVS), 65–85 (VYPVYRNLLALLLIGPFAYFF), 91–111 (PPLTISLLAQFFFLALIGITA), 126–146 (TFASAMQNSVPAITFIMACAL), 158–178 (GVAKVLGTLVSIGGATVITLY), 204–224 (LTLGWLYLMGHCLSWAGWMVL), 237–257 (TLTSFTCFFGLIQFLVIALFV), 272–292 (LFTILYAGIIASGLVVYLQTW), 300–320 (VFVAVFQPLQTLLVAAMAFLI), and 325–345 (LYSGGIVGAVFIMLGLYLVLW). EamA domains follow at residues 44–173 (FCFA…GGAT) and 216–344 (LSWA…YLVL).

The protein belongs to the drug/metabolite transporter (DMT) superfamily. Plant drug/metabolite exporter (P-DME) (TC 2.A.7.4) family.

Its subcellular location is the membrane. This Arabidopsis thaliana (Mouse-ear cress) protein is WAT1-related protein At3g18200.